Reading from the N-terminus, the 315-residue chain is MNRAYGKMLGVGRALGGRVVTNRDLEAVLDTSDEWISTRTGIRERRFVAEGQSCVTLAVEAARRALEHAGVPGASVDLVVCATSTNPESMPSVACLVGEAVGAAGVGAMDLSAACAGFAYAASVAGAMLASGLASRVLLVGADEMTSIVNVRDRSTGILFGDGAGAVVLDRGDGSSGFVDHILGADGRMAPLGRAGHPGDGKRPLYQNGREIFRFAVRMFPEMVEKIMARNGISLDEVQYIIPHQANARIIQAAARKLEVPEEKLVVNVDRFGNTSAASIPLSYPDIFDGLEPGKYIITVGFGFGLTWAANLYRI.

Catalysis depends on residues C115 and H244. An ACP-binding region spans residues Q245–R249. N274 is a catalytic residue.

This sequence belongs to the thiolase-like superfamily. FabH family. Homodimer.

Its subcellular location is the cytoplasm. It catalyses the reaction malonyl-[ACP] + acetyl-CoA + H(+) = 3-oxobutanoyl-[ACP] + CO2 + CoA. Its pathway is lipid metabolism; fatty acid biosynthesis. Its function is as follows. Catalyzes the condensation reaction of fatty acid synthesis by the addition to an acyl acceptor of two carbons from malonyl-ACP. Catalyzes the first condensation reaction which initiates fatty acid synthesis and may therefore play a role in governing the total rate of fatty acid production. Possesses both acetoacetyl-ACP synthase and acetyl transacylase activities. Its substrate specificity determines the biosynthesis of branched-chain and/or straight-chain of fatty acids. This Rubrobacter xylanophilus (strain DSM 9941 / JCM 11954 / NBRC 16129 / PRD-1) protein is Beta-ketoacyl-[acyl-carrier-protein] synthase III.